The chain runs to 677 residues: Forkhead box protein P1 (677 aa).

Residues 1–18 (MMQESGTETKSNGSAIQN) show a composition bias toward polar residues. The segment at 1 to 43 (MMQESGTETKSNGSAIQNGSGGSNHLLECGGLREGRSNGETPA) is disordered. S83 is subject to Phosphoserine. The span at 270–283 (IMNPHASTNGQLSV) shows a compositional bias: polar residues. Residues 270-298 (IMNPHASTNGQLSVHTPKRESLSHEEHPH) form a disordered region. Basic and acidic residues predominate over residues 286-298 (PKRESLSHEEHPH). A Glycyl lysine isopeptide (Lys-Gly) (interchain with G-Cter in SUMO2) cross-link involves residue K287. The C2H2-type zinc finger occupies 306–331 (GVCKWPGCEAVCEDFQSFLKHLNSEH). The segment at 348-369 (VQQLELQLAKDKERLQAMMTHL) is leucine-zipper. Residues K372 and K377 each participate in a glycyl lysine isopeptide (Lys-Gly) (interchain with G-Cter in SUMO2) cross-link. Residues 382–386 (PLNLV) form a CTBP1-binding region. The segment covering 390-403 (TLSKSASEASPQSL) has biased composition (polar residues). Residues 390-422 (TLSKSASEASPQSLPHTPTTPTAPLTPVTQGPS) form a disordered region. Residues 404 to 418 (PHTPTTPTAPLTPVT) show a composition bias toward low complexity. Residue K442 forms a Glycyl lysine isopeptide (Lys-Gly) (interchain with G-Cter in SUMO2) linkage. Residues 465-555 (RPPFTYASLI…PQKISGNPSL (91 aa)) constitute a DNA-binding region (fork-head). The interval 611 to 677 (EHTNSNESDS…EDEPVNEDME (67 aa)) is disordered. The span at 612-623 (HTNSNESDSSPG) shows a compositional bias: polar residues. T653 is subject to Phosphothreonine. S658 is modified (phosphoserine). Acidic residues predominate over residues 667 to 677 (YEDEPVNEDME).

As to quaternary structure, forms homodimers and heterodimers with FOXP2 and FOXP4. Dimerization is required for DNA-binding. Self-associates. Interacts with CTBP1. Interacts with NCOR2 and AR. Interacts with FOXP2. Interacts with TBR1. Interacts with AURKA; this interaction facilitates the phosphorylation of FOXP1, which suppresses the expression of FBXL7. Interacts with ZMYM2. Isoform 8 is specifically expressed in embryonic stem cells.

The protein resides in the nucleus. Functionally, transcriptional repressor. Can act with CTBP1 to synergistically repress transcription but CTPBP1 is not essential. Plays an important role in the specification and differentiation of lung epithelium. Acts cooperatively with FOXP4 to regulate lung secretory epithelial cell fate and regeneration by restricting the goblet cell lineage program; the function may involve regulation of AGR2. Essential transcriptional regulator of B-cell development. Involved in regulation of cardiac muscle cell proliferation. Involved in the columnar organization of spinal motor neurons. Promotes the formation of the lateral motor neuron column (LMC) and the preganglionic motor column (PGC) and is required for respective appropriate motor axon projections. The segment-appropriate generation of spinal cord motor columns requires cooperation with other Hox proteins. Can regulate PITX3 promoter activity; may promote midbrain identity in embryonic stem cell-derived dopamine neurons by regulating PITX3. Negatively regulates the differentiation of T follicular helper cells T(FH)s. Involved in maintenance of hair follicle stem cell quiescence; the function probably involves regulation of FGF18. Represses transcription of various pro-apoptotic genes and cooperates with NF-kappa B-signaling in promoting B-cell expansion by inhibition of caspase-dependent apoptosis. Binds to CSF1R promoter elements and is involved in regulation of monocyte differentiation and macrophage functions; repression of CSF1R in monocytes seems to involve NCOR2 as corepressor. Involved in endothelial cell proliferation, tube formation and migration indicative for a role in angiogenesis; the role in neovascularization seems to implicate suppression of SEMA5B. Can negatively regulate androgen receptor signaling. Acts as a transcriptional activator of the FBXL7 promoter; this activity is regulated by AURKA. Its function is as follows. Involved in transcriptional regulation in embryonic stem cells (ESCs). Stimulates expression of transcription factors that are required for pluripotency and decreases expression of differentiation-associated genes. Has distinct DNA-binding specifities as compared to the canonical form and preferentially binds DNA with the sequence 5'-CGATACAA-3' (or closely related sequences). Promotes ESC self-renewal and pluripotency. The protein is Forkhead box protein P1 (FOXP1) of Homo sapiens (Human).